A 56-amino-acid polypeptide reads, in one-letter code: Large ribosomal subunit protein eL40 (56 aa).

The protein belongs to the eukaryotic ribosomal protein eL40 family.

This is Large ribosomal subunit protein eL40 from Sulfurisphaera tokodaii (strain DSM 16993 / JCM 10545 / NBRC 100140 / 7) (Sulfolobus tokodaii).